A 427-amino-acid polypeptide reads, in one-letter code: Enolase (427 aa).

Residue glutamine 162 participates in (2R)-2-phosphoglycerate binding. Residue glutamate 206 is the Proton donor of the active site. Residues aspartate 243, glutamate 286, and aspartate 313 each coordinate Mg(2+). Lysine 338, arginine 367, serine 368, and lysine 389 together coordinate (2R)-2-phosphoglycerate. Catalysis depends on lysine 338, which acts as the Proton acceptor.

The protein belongs to the enolase family. It depends on Mg(2+) as a cofactor.

The protein localises to the cytoplasm. The protein resides in the secreted. It localises to the cell surface. It carries out the reaction (2R)-2-phosphoglycerate = phosphoenolpyruvate + H2O. The protein operates within carbohydrate degradation; glycolysis; pyruvate from D-glyceraldehyde 3-phosphate: step 4/5. Its function is as follows. Catalyzes the reversible conversion of 2-phosphoglycerate (2-PG) into phosphoenolpyruvate (PEP). It is essential for the degradation of carbohydrates via glycolysis. The protein is Enolase of Methanopyrus kandleri (strain AV19 / DSM 6324 / JCM 9639 / NBRC 100938).